Reading from the N-terminus, the 302-residue chain is Short-chain dehydrogenase/reductase 3 (302 aa).

Transmembrane regions (helical) follow at residues 9–29 (LVMF…GLVL), 170–190 (IVCL…DYCT), 195–215 (AFAF…VSAT), and 253–273 (AVQL…LVIL). A substrate-binding site is contributed by Ser-175. The active-site Proton acceptor is Tyr-188.

Belongs to the short-chain dehydrogenases/reductases (SDR) family. Widely expressed with highest levels found in heart, placenta, lung, liver, kidney, pancreas, thyroid, testis, stomach, trachea and spinal cord. Lower levels found in skeletal muscle, intestine and lymph node. No expression detected in brain. In the retina, expressed in cone but not rod outer segments.

The protein localises to the membrane. It carries out the reaction all-trans-retinol + NADP(+) = all-trans-retinal + NADPH + H(+). In terms of biological role, catalyzes the reduction of all-trans-retinal to all-trans-retinol in the presence of NADPH. This chain is Short-chain dehydrogenase/reductase 3 (DHRS3), found in Homo sapiens (Human).